A 231-amino-acid chain; its full sequence is Ribose-5-phosphate isomerase A (231 aa).

Residues 31–34 (SGST), 87–90 (DGAD), and 100–103 (KGGG) each bind substrate. E109 serves as the catalytic Proton acceptor. K127 provides a ligand contact to substrate.

It belongs to the ribose 5-phosphate isomerase family. As to quaternary structure, homodimer.

The enzyme catalyses aldehydo-D-ribose 5-phosphate = D-ribulose 5-phosphate. The protein operates within carbohydrate degradation; pentose phosphate pathway; D-ribose 5-phosphate from D-ribulose 5-phosphate (non-oxidative stage): step 1/1. Its function is as follows. Catalyzes the reversible conversion of ribose-5-phosphate to ribulose 5-phosphate. The polypeptide is Ribose-5-phosphate isomerase A (Chlamydia pneumoniae (Chlamydophila pneumoniae)).